Consider the following 360-residue polypeptide: Ribosomal RNA large subunit methyltransferase M (360 aa).

S-adenosyl-L-methionine-binding positions include serine 187, cysteine 220–glycine 223, aspartate 239, aspartate 259, and aspartate 276. The active-site Proton acceptor is the lysine 305.

This sequence belongs to the class I-like SAM-binding methyltransferase superfamily. RNA methyltransferase RlmE family. RlmM subfamily. In terms of assembly, monomer.

It is found in the cytoplasm. It carries out the reaction cytidine(2498) in 23S rRNA + S-adenosyl-L-methionine = 2'-O-methylcytidine(2498) in 23S rRNA + S-adenosyl-L-homocysteine + H(+). Functionally, catalyzes the 2'-O-methylation at nucleotide C2498 in 23S rRNA. The sequence is that of Ribosomal RNA large subunit methyltransferase M from Shewanella sediminis (strain HAW-EB3).